The chain runs to 842 residues: MutS protein homolog him-14 (842 aa).

Residues 1–21 form a disordered region; the sequence is MYSNKSFQRRQRQQVAESRSE. ATP is bound at residue 588–595; the sequence is GPNMAGKS.

It belongs to the DNA mismatch repair MutS family. Heterooligomer of him-14 and msh-5.

It localises to the nucleus. Functionally, required during the pachytene stage of meiotic prophase for the formation of crossovers between homologous chromosomes. Together with msh-5 and zhp-3 plays a role in the activation of DNA damage-dependent apoptosis at the DNA damage checkpoint in pachytene cells. Not needed for pairing or synapsis. May promote crossing over by interfering with Holliday junction branch migration. Has no apparent role in DNA mismatch repair. The chain is MutS protein homolog him-14 from Caenorhabditis elegans.